The chain runs to 362 residues: Anthranilate phosphoribosyltransferase (362 aa).

5-phospho-alpha-D-ribose 1-diphosphate is bound by residues Gly96, 99–100 (GD), Thr104, 106–109 (NIST), 124–132 (KHGNRAASS), and Gly136. Position 96 (Gly96) interacts with anthranilate. Ser108 is a Mg(2+) binding site. An anthranilate-binding site is contributed by Asn127. Arg182 provides a ligand contact to anthranilate. Residues Asp240 and Glu241 each coordinate Mg(2+).

Belongs to the anthranilate phosphoribosyltransferase family. Homodimer. Mg(2+) is required as a cofactor.

It catalyses the reaction N-(5-phospho-beta-D-ribosyl)anthranilate + diphosphate = 5-phospho-alpha-D-ribose 1-diphosphate + anthranilate. It functions in the pathway amino-acid biosynthesis; L-tryptophan biosynthesis; L-tryptophan from chorismate: step 2/5. Catalyzes the transfer of the phosphoribosyl group of 5-phosphorylribose-1-pyrophosphate (PRPP) to anthranilate to yield N-(5'-phosphoribosyl)-anthranilate (PRA). The sequence is that of Anthranilate phosphoribosyltransferase from Rhodococcus jostii (strain RHA1).